Consider the following 182-residue polypeptide: Inner membrane assembly complex subunit 17 (182 aa).

The transit peptide at 1–45 directs the protein to the mitochondrion; that stretch reads MLKRRSNALITLSRTKLFPITTVAYYHRRLLNQQRRAVSTSPKKE. Residues 46 to 107 are Mitochondrial matrix-facing; it reads IKSLEDLANL…EIPVKRFIRP (62 aa). A helical transmembrane segment spans residues 108–127; it reads LWMFILMGSSVYLLLHFSWW. The stretch at 128–158 forms a coiled coil; that stretch reads KLEHEERESQLKKEVEILEHQLNELIIQDKT. The Mitochondrial intermembrane portion of the chain corresponds to 128-182; sequence KLEHEERESQLKKEVEILEHQLNELIIQDKTHNTSRGKGSNESTHMKPWYRRWFW.

The protein belongs to the INA17 family. In terms of assembly, component of the inner membrane assembly (INA) complex, composed of INA17 and INA22. Interacts with a subset of F(1)F(0)-ATP synthase subunits of the F(1)-domain and the peripheral stalk.

The protein resides in the mitochondrion inner membrane. Functionally, component of the INA complex (INAC) that promotes the biogenesis of mitochondrial F(1)F(0)-ATP synthase. INAC facilitates the assembly of the peripheral stalk and promotes the assembly of the catalytic F(1)-domain with the membrane-embedded F(0)-domain. The sequence is that of Inner membrane assembly complex subunit 17 from Saccharomyces cerevisiae (strain YJM789) (Baker's yeast).